The chain runs to 180 residues: Secreted RxLR effector protein 19 (180 aa).

Positions 1 to 19 (MKLLLRALATFVLLNGVDS) are cleaved as a signal peptide. The 147-residue stretch at 25-171 (FQKCNVTGGP…IFALGALWGP (147 aa)) folds into the Jacalin-type lectin domain. The RxLR-dEER motif lies at 52 to 77 (RALRLCGVDFVDGIGVTIWDLSVEEN).

Belongs to the RxLR effector family.

The protein resides in the secreted. Its subcellular location is the host cytoplasm. It localises to the host nucleus. Its function is as follows. Effector that partially suppresses the tobacco programmed cell death induced by cell death-inducing proteins. The chain is Secreted RxLR effector protein 19 from Plasmopara viticola (Downy mildew of grapevine).